The primary structure comprises 197 residues: MRPFRLGLTGSIGMGKSTTAALFAEEGVPVWDADAAVHRLYAPGGALVGPVAALCPAALKGGAVDRGALRDWIAADPTALPRLEALVHPAVAADRAAFLAHARTDIVLLDIPLLYEKGSEAEMDAVLLVTAPPVLQRARVLGRGTMTEAQFEAILARQMPDREKRARATHILETLGLEAARAYVRALIAHIRETADA.

Residues 5–197 (RLGLTGSIGM…IAHIRETADA (193 aa)) form the DPCK domain. ATP is bound at residue 13–18 (GMGKST).

Belongs to the CoaE family.

Its subcellular location is the cytoplasm. The enzyme catalyses 3'-dephospho-CoA + ATP = ADP + CoA + H(+). It functions in the pathway cofactor biosynthesis; coenzyme A biosynthesis; CoA from (R)-pantothenate: step 5/5. Its function is as follows. Catalyzes the phosphorylation of the 3'-hydroxyl group of dephosphocoenzyme A to form coenzyme A. This is Dephospho-CoA kinase from Cereibacter sphaeroides (strain ATCC 17023 / DSM 158 / JCM 6121 / CCUG 31486 / LMG 2827 / NBRC 12203 / NCIMB 8253 / ATH 2.4.1.) (Rhodobacter sphaeroides).